We begin with the raw amino-acid sequence, 193 residues long: Ribonuclease HII (193 aa).

Residues Y15–C193 enclose the RNase H type-2 domain. A divalent metal cation is bound by residues D21, E22, and D112.

Belongs to the RNase HII family. Mn(2+) serves as cofactor. The cofactor is Mg(2+).

It localises to the cytoplasm. It catalyses the reaction Endonucleolytic cleavage to 5'-phosphomonoester.. In terms of biological role, endonuclease that specifically degrades the RNA of RNA-DNA hybrids. This chain is Ribonuclease HII, found in Rickettsia typhi (strain ATCC VR-144 / Wilmington).